Consider the following 128-residue polypeptide: Diacylglycerol kinase (128 aa).

Glutamate 34 contributes to the a divalent metal cation binding site. Transmembrane regions (helical) follow at residues 35 to 55 (SAFR…SYLT) and 58 to 78 (FLEW…ELIN). The active-site Proton acceptor is the glutamate 75. Glutamate 82 lines the a divalent metal cation pocket. A helical membrane pass occupies residues 108 to 128 (LIGLIFWAFIWGRYLLTLYFN).

It belongs to the bacterial diacylglycerol kinase family. Requires Mg(2+) as cofactor.

It is found in the cell inner membrane. The enzyme catalyses a 1,2-diacyl-sn-glycerol + ATP = a 1,2-diacyl-sn-glycero-3-phosphate + ADP + H(+). Catalyzes the ATP-dependent phosphorylation of sn-l,2-diacylglycerol (DAG) to phosphatidic acid. Involved in the recycling of diacylglycerol produced as a by-product during membrane-derived oligosaccharide (MDO) biosynthesis. The sequence is that of Diacylglycerol kinase (dgkA) from Helicobacter pylori (strain J99 / ATCC 700824) (Campylobacter pylori J99).